A 241-amino-acid polypeptide reads, in one-letter code: DNA repair protein RecO (241 aa).

This sequence belongs to the RecO family.

Involved in DNA repair and RecF pathway recombination. The polypeptide is DNA repair protein RecO (Rickettsia bellii (strain OSU 85-389)).